Reading from the N-terminus, the 172-residue chain is Bifunctional protein PyrR (172 aa).

The short motif at 93 to 105 is the PRPP-binding element; sequence VILIDDVLYTGRT.

Belongs to the purine/pyrimidine phosphoribosyltransferase family. PyrR subfamily. Homodimer and homohexamer; in equilibrium.

The catalysed reaction is UMP + diphosphate = 5-phospho-alpha-D-ribose 1-diphosphate + uracil. In terms of biological role, regulates transcriptional attenuation of the pyrimidine nucleotide (pyr) operon by binding in a uridine-dependent manner to specific sites on pyr mRNA. This disrupts an antiterminator hairpin in the RNA and favors formation of a downstream transcription terminator, leading to a reduced expression of downstream genes. Its function is as follows. Also displays a weak uracil phosphoribosyltransferase activity which is not physiologically significant. In Streptococcus sanguinis (strain SK36), this protein is Bifunctional protein PyrR.